A 166-amino-acid polypeptide reads, in one-letter code: MMYFVYLLSILLVLGFMAFASKPSPIYGGLSLVLSGGVGCGIVVSLGGSFLGLIVFLVYLGGMLVVFGYTAAMATEEYPETWVDSTVFTNLLIMVGMLGVIWYYFSGEVDLSINYDLLDLGGVEVLGGDYNGVSLLSACGGWELIFSGWILFLTIFVVLEVTRGEH.

Helical transmembrane passes span 1 to 21, 26 to 46, 47 to 67, 87 to 107, and 139 to 159; these read MMYF…AFAS, IYGG…VVSL, GGSF…LVVF, VFTN…YFSG, and CGGW…FVVL.

It belongs to the complex I subunit 6 family. As to quaternary structure, core subunit of respiratory chain NADH dehydrogenase (Complex I) which is composed of 45 different subunits.

It localises to the mitochondrion inner membrane. The enzyme catalyses a ubiquinone + NADH + 5 H(+)(in) = a ubiquinol + NAD(+) + 4 H(+)(out). Core subunit of the mitochondrial membrane respiratory chain NADH dehydrogenase (Complex I) which catalyzes electron transfer from NADH through the respiratory chain, using ubiquinone as an electron acceptor. Essential for the catalytic activity and assembly of complex I. The polypeptide is NADH-ubiquinone oxidoreductase chain 6 (MT-ND6) (Ornithorhynchus anatinus (Duckbill platypus)).